A 105-amino-acid chain; its full sequence is MAKISSPTETERCIESLIAVFQKYAGKDGYNYTLSKTEFLSFMNTELAAFTKNQKDPGVLDRMMKKLDTNSDGQLDFSEFLNLIGGLAMACHDSFLKAVPSQKRT.

Met1 bears the N-acetylmethionine mark. N-acetylalanine; in Protein S100-A11, N-terminally processed is present on Ala2. Position 3 is an N6-acetyllysine (Lys3). Residues Ser5 and Ser6 each carry the phosphoserine modification. Thr10 carries the post-translational modification Phosphothreonine. 2 EF-hand domains span residues 13-49 (CIES…ELAA) and 55-90 (KDPG…LAMA). Lys27 bears the N6-acetyllysine mark. Ca(2+)-binding residues include Thr33, Glu38, Asp68, Asn70, Asp72, Gln74, and Glu79.

The protein belongs to the S-100 family. Homodimer; disulfide-linked. Post-translationally, phosphorylation at Thr-10 by PRKCA significantly suppresses homodimerization and promotes association with NCL/nucleolin which induces nuclear translocation.

Its subcellular location is the cytoplasm. It is found in the nucleus. Facilitates the differentiation and the cornification of keratinocytes. This is Protein S100-A11 (S100A11) from Homo sapiens (Human).